Reading from the N-terminus, the 280-residue chain is Probable 6-phosphogluconolactonase 2 (280 aa).

The protein belongs to the glucosamine/galactosamine-6-phosphate isomerase family. 6-phosphogluconolactonase subfamily.

The enzyme catalyses 6-phospho-D-glucono-1,5-lactone + H2O = 6-phospho-D-gluconate + H(+). It participates in carbohydrate degradation; pentose phosphate pathway; D-ribulose 5-phosphate from D-glucose 6-phosphate (oxidative stage): step 2/3. Hydrolysis of 6-phosphogluconolactone to 6-phosphogluconate. This chain is Probable 6-phosphogluconolactonase 2, found in Oryza sativa subsp. indica (Rice).